The sequence spans 231 residues: eRF1 methyltransferase catalytic subunit mtq2 (231 aa).

Residues 54-58 (GCGSG), Asp-80, and Asn-130 each bind S-adenosyl-L-methionine. Substrate is bound at residue 130–133 (NPPY).

The protein belongs to the eukaryotic/archaeal PrmC-related family. Heterodimer of mtq2-trm112. mtq2 is the catalytic subunit carrying the catalytic and the S-adenosyl L-methionine binding sites.

The protein localises to the cytoplasm. Its subcellular location is the nucleus. The catalysed reaction is L-glutaminyl-[peptide chain release factor] + S-adenosyl-L-methionine = N(5)-methyl-L-glutaminyl-[peptide chain release factor] + S-adenosyl-L-homocysteine + H(+). In terms of biological role, methylates eRF1 on 'Gln-182' using S-adenosyl L-methionine as methyl donor. eRF1 needs to be complexed to eRF3 in its GTP-bound form to be efficiently methylated. This chain is eRF1 methyltransferase catalytic subunit mtq2 (mtq2), found in Schizosaccharomyces pombe (strain 972 / ATCC 24843) (Fission yeast).